The primary structure comprises 214 residues: Protein verrocchio (214 aa).

As to quaternary structure, probably homomultimerizes. Component of the MTV complex, composed of moi/modigliani, tea and ver/verrocchio. Interacts with moi/modigliani and tea (via C-terminus); the interactions are direct and require fully intact moi/modigliani and ver/verrocchio. The MTV complex is recruited to telomeres by the HipHop-HOAP complex, consisting of HipHop, cav/HOAP and Su(var)205/HP1 to form the terminin telomere-capping complex. Interacts with cav/HOAP; the interaction is direct. Interacts with Su(var)205/HP1; the interaction is indirect and probably requires cav/HOAP or moi/modigliani. Probably interacts with peo (via N-terminus and UBC domain).

The protein localises to the nucleus. It is found in the chromosome. It localises to the telomere. Functionally, part of the MTV complex that associates with the HipHop-HOAP complex to form the terminin telomere-capping complex involved in telomere maintenance and prevention of telomere fusion. As part of the MTV complex binds single stranded DNA in a sequence-independent manner, protecting it from degradation. The protein is Protein verrocchio of Drosophila melanogaster (Fruit fly).